The primary structure comprises 349 residues: Glycerol-3-phosphate dehydrogenase [NAD(P)+] (349 aa).

5 residues coordinate NADPH: serine 31, phenylalanine 32, arginine 52, lysine 53, and lysine 126. Sn-glycerol 3-phosphate contacts are provided by lysine 126, glycine 154, and serine 156. Alanine 158 lines the NADPH pocket. The sn-glycerol 3-phosphate site is built by lysine 209, aspartate 262, serine 272, arginine 273, and asparagine 274. Residue lysine 209 is the Proton acceptor of the active site. Arginine 273 is an NADPH binding site. NADPH is bound by residues valine 297 and glutamate 299.

The protein belongs to the NAD-dependent glycerol-3-phosphate dehydrogenase family.

Its subcellular location is the cytoplasm. The catalysed reaction is sn-glycerol 3-phosphate + NAD(+) = dihydroxyacetone phosphate + NADH + H(+). It catalyses the reaction sn-glycerol 3-phosphate + NADP(+) = dihydroxyacetone phosphate + NADPH + H(+). It participates in membrane lipid metabolism; glycerophospholipid metabolism. Catalyzes the reduction of the glycolytic intermediate dihydroxyacetone phosphate (DHAP) to sn-glycerol 3-phosphate (G3P), the key precursor for phospholipid synthesis. The polypeptide is Glycerol-3-phosphate dehydrogenase [NAD(P)+] (Clostridium tetani (strain Massachusetts / E88)).